The chain runs to 490 residues: Metal cation symporter ZIP14 (490 aa).

The first 28 residues, 1–28 (MKLLHPAFQSCLLLTLLGLWRTTPEAHA), serve as a signal peptide directing secretion. Topologically, residues 29–155 (SSPGAPAISA…PSAVEVWGYG (127 aa)) are extracellular. Residues asparagine 75, asparagine 85, and asparagine 100 are each glycosylated (N-linked (GlcNAc...) asparagine). The chain crosses the membrane as a helical span at residues 156–176 (LLCVTVISLCSLLGASVVPFM). Residues 177-184 (KKTFYKRL) lie on the Cytoplasmic side of the membrane. The chain crosses the membrane as a helical span at residues 185–205 (LLYFIALAIGTLYSNALFQLI). At 206–222 (PEAFGFNPLEDYYVSKS) the chain is on the extracellular side. A helical transmembrane segment spans residues 223–243 (AVVFGGFYLFFFTEKILKILL). Topologically, residues 244 to 395 (KQKNEHHHGH…LLNAGMSIQQ (152 aa)) are cytoplasmic. The short motif at 249–256 (HHHGHSHY) is the HHHGHXHX-motif element. Residues 374–379 (EEFPHE) carry the XEXPHE-motif motif. A helical transmembrane segment spans residues 396–416 (ALFFNFLSACCCYLGLAFGIL). Over 417-422 (AGSHFS) the chain is Extracellular. Residues 423-443 (ANWIFALAGGMFLYISLADMF) form a helical membrane-spanning segment. The Cytoplasmic segment spans residues 444–458 (PEMNEVCQEDERKGS). A helical transmembrane segment spans residues 459 to 479 (ILIPFVIQNLGLLTGFTIMVV). Residues 480–490 (LTMYSGQIQIG) are Extracellular-facing.

It belongs to the ZIP transporter (TC 2.A.5) family. As to quaternary structure, homotrimer. In terms of processing, ubiquitinated. Ubiquitination occurs upon iron depletion. The ubiquitinated form undergoes proteasomal degradation. Post-translationally, N-glycosylated. N-glycosylation at Asn-100 is required for iron-regulated extraction of the transporter from membranes and subsequent proteasomal degradation.

Its subcellular location is the cell membrane. The protein resides in the apical cell membrane. The protein localises to the basolateral cell membrane. It localises to the early endosome membrane. It is found in the late endosome membrane. Its subcellular location is the lysosome membrane. The enzyme catalyses Zn(2+)(out) + 2 hydrogencarbonate(out) = Zn(2+)(in) + 2 hydrogencarbonate(in). The catalysed reaction is Mn(2+)(out) + 2 hydrogencarbonate(out) = Mn(2+)(in) + 2 hydrogencarbonate(in). It carries out the reaction Fe(2+)(out) + 2 hydrogencarbonate(out) = Fe(2+)(in) + 2 hydrogencarbonate(in). It catalyses the reaction Cd(2+)(out) + 2 hydrogencarbonate(out) = Cd(2+)(in) + 2 hydrogencarbonate(in). Functionally, electroneutral transporter of the plasma membrane mediating the cellular uptake of the divalent metal cations zinc, manganese and iron that are important for tissue homeostasis, metabolism, development and immunity. Functions as an energy-dependent symporter, transporting through the membranes an electroneutral complex composed of a divalent metal cation and two bicarbonate anions. Beside these endogenous cellular substrates, can also import cadmium a non-essential metal which is cytotoxic and carcinogenic. Controls the cellular uptake by the intestinal epithelium of systemic zinc, which is in turn required to maintain tight junctions and the intestinal permeability. Modifies the activity of zinc-dependent phosphodiesterases, thereby indirectly regulating G protein-coupled receptor signaling pathways important for gluconeogenesis and chondrocyte differentiation. Regulates insulin receptor signaling, glucose uptake, glycogen synthesis and gluconeogenesis in hepatocytes through the zinc-dependent intracellular catabolism of insulin. Through zinc cellular uptake also plays a role in the adaptation of cells to endoplasmic reticulum stress. Major manganese transporter of the basolateral membrane of intestinal epithelial cells, it plays a central role in manganese systemic homeostasis through intestinal manganese uptake. Also involved in manganese extracellular uptake by cells of the blood-brain barrier. May also play a role in manganese and zinc homeostasis participating in their elimination from the blood through the hepatobiliary excretion. Also functions in the extracellular uptake of free iron. May also function intracellularly and mediate the transport from endosomes to cytosol of iron endocytosed by transferrin. Plays a role in innate immunity by regulating the expression of cytokines by activated macrophages. This is Metal cation symporter ZIP14 from Pongo abelii (Sumatran orangutan).